The following is a 245-amino-acid chain: Phosphoribosylaminoimidazole-succinocarboxamide synthase (245 aa).

It belongs to the SAICAR synthetase family.

The enzyme catalyses 5-amino-1-(5-phospho-D-ribosyl)imidazole-4-carboxylate + L-aspartate + ATP = (2S)-2-[5-amino-1-(5-phospho-beta-D-ribosyl)imidazole-4-carboxamido]succinate + ADP + phosphate + 2 H(+). The protein operates within purine metabolism; IMP biosynthesis via de novo pathway; 5-amino-1-(5-phospho-D-ribosyl)imidazole-4-carboxamide from 5-amino-1-(5-phospho-D-ribosyl)imidazole-4-carboxylate: step 1/2. This is Phosphoribosylaminoimidazole-succinocarboxamide synthase from Nostoc sp. (strain PCC 7120 / SAG 25.82 / UTEX 2576).